The following is a 351-amino-acid chain: UDP-3-O-acylglucosamine N-acyltransferase (351 aa).

Catalysis depends on histidine 240, which acts as the Proton acceptor.

It belongs to the transferase hexapeptide repeat family. LpxD subfamily. As to quaternary structure, homotrimer.

The enzyme catalyses a UDP-3-O-[(3R)-3-hydroxyacyl]-alpha-D-glucosamine + a (3R)-hydroxyacyl-[ACP] = a UDP-2-N,3-O-bis[(3R)-3-hydroxyacyl]-alpha-D-glucosamine + holo-[ACP] + H(+). Its pathway is bacterial outer membrane biogenesis; LPS lipid A biosynthesis. Catalyzes the N-acylation of UDP-3-O-acylglucosamine using 3-hydroxyacyl-ACP as the acyl donor. Is involved in the biosynthesis of lipid A, a phosphorylated glycolipid that anchors the lipopolysaccharide to the outer membrane of the cell. This Pseudomonas fluorescens (strain ATCC BAA-477 / NRRL B-23932 / Pf-5) protein is UDP-3-O-acylglucosamine N-acyltransferase.